The primary structure comprises 819 residues: Leucine--tRNA ligase (819 aa).

The 'HIGH' region motif lies at 40 to 51; that stretch reads PYPSGAGLHVGH. Residues 600 to 604 carry the 'KMSKS' region motif; the sequence is KMSKS. Lysine 603 contacts ATP.

Belongs to the class-I aminoacyl-tRNA synthetase family.

The protein resides in the cytoplasm. It carries out the reaction tRNA(Leu) + L-leucine + ATP = L-leucyl-tRNA(Leu) + AMP + diphosphate. The sequence is that of Leucine--tRNA ligase from Chlamydia trachomatis serovar D (strain ATCC VR-885 / DSM 19411 / UW-3/Cx).